Consider the following 651-residue polypeptide: Mitogen-activated protein kinase kinase kinase 3 (651 aa).

The Protein kinase domain occupies 68-330 (WRKGELIGCG…ATELLQHPFV (263 aa)). ATP-binding positions include 74–82 (IGCGAFGRV) and Lys-97. Positions 105 to 130 (SASKEKTQGHIRELEEEVQLLKNLSH) form a coiled coil. Glycyl lysine isopeptide (Lys-Gly) (interchain with G-Cter in ubiquitin) cross-links involve residues Lys-108 and Lys-110. Asp-196 functions as the Proton acceptor in the catalytic mechanism. The disordered stretch occupies residues 573–608 (MPSPLKSSKRTLNTSRVMQSGTEPTQVNESTKKGVN). Positions 582–608 (RTLNTSRVMQSGTEPTQVNESTKKGVN) are enriched in polar residues. Residues 618–641 (RKWEEELYEELERHRENLRHAGAG) are a coiled coil.

This sequence belongs to the protein kinase superfamily. STE Ser/Thr protein kinase family. MAP kinase kinase kinase subfamily. In terms of assembly, interacts with NACK2 and MKK6. In terms of tissue distribution, expressed in roots and flowers.

The protein resides in the cytoplasm. It localises to the cytoskeleton. The enzyme catalyses L-seryl-[protein] + ATP = O-phospho-L-seryl-[protein] + ADP + H(+). It carries out the reaction L-threonyl-[protein] + ATP = O-phospho-L-threonyl-[protein] + ADP + H(+). In terms of biological role, involved in cortical microtubules organization and stabilization by regulating the phosphorylation state of microtubule-associated proteins such as MAP65-1. In Arabidopsis thaliana (Mouse-ear cress), this protein is Mitogen-activated protein kinase kinase kinase 3 (ANP3).